The primary structure comprises 542 residues: Multidrug transporter DTR1 (542 aa).

N6 and N46 each carry an N-linked (GlcNAc...) asparagine glycan. A helical transmembrane segment spans residues 80–100 (LIFLIVIYNGFLGPLAGNVFI). N-linked (GlcNAc...) asparagine glycosylation is found at N111 and N118. 5 helical membrane-spanning segments follow: residues 119-139 (ATVS…GALA), 146-166 (ILYI…ASVP), 169-189 (IGSL…VISL), 210-230 (FMLG…LILL), and 237-257 (WLFG…ILLL). N274 carries N-linked (GlcNAc...) asparagine glycosylation. 4 helical membrane-spanning segments follow: residues 332–352 (IMTF…FCTY), 374–394 (IGAC…IGGH), 419–439 (ILTV…GWCI), and 441–461 (FHYH…GLTW). N-linked (GlcNAc...) asparagine glycosylation occurs at N463. The next 2 helical transmembrane spans lie at 481–501 (AIAV…ALIA) and 511–531 (FCFL…LVLI).

The protein belongs to the major facilitator superfamily. CAR1 family.

Its subcellular location is the cell membrane. In terms of biological role, plasma membrane acetic acid exporter, relieving the stress induced upon cells within hemocytes, and thus enabling increased proliferation and virulence against Galleria mellonella larvae. Confers resistance to weak acid and oxidative stress, but not to antifungal drugs. This chain is Multidrug transporter DTR1, found in Candida glabrata (strain ATCC 2001 / BCRC 20586 / JCM 3761 / NBRC 0622 / NRRL Y-65 / CBS 138) (Yeast).